The primary structure comprises 357 residues: UDP-3-O-acylglucosamine N-acyltransferase (357 aa).

The active-site Proton acceptor is the histidine 251.

The protein belongs to the transferase hexapeptide repeat family. LpxD subfamily. Homotrimer.

The enzyme catalyses a UDP-3-O-[(3R)-3-hydroxyacyl]-alpha-D-glucosamine + a (3R)-hydroxyacyl-[ACP] = a UDP-2-N,3-O-bis[(3R)-3-hydroxyacyl]-alpha-D-glucosamine + holo-[ACP] + H(+). The protein operates within bacterial outer membrane biogenesis; LPS lipid A biosynthesis. Functionally, catalyzes the N-acylation of UDP-3-O-acylglucosamine using 3-hydroxyacyl-ACP as the acyl donor. Is involved in the biosynthesis of lipid A, a phosphorylated glycolipid that anchors the lipopolysaccharide to the outer membrane of the cell. This chain is UDP-3-O-acylglucosamine N-acyltransferase, found in Ralstonia pickettii (strain 12J).